The primary structure comprises 80 residues: Exodeoxyribonuclease 7 small subunit (80 aa).

It belongs to the XseB family. As to quaternary structure, heterooligomer composed of large and small subunits.

Its subcellular location is the cytoplasm. It catalyses the reaction Exonucleolytic cleavage in either 5'- to 3'- or 3'- to 5'-direction to yield nucleoside 5'-phosphates.. Bidirectionally degrades single-stranded DNA into large acid-insoluble oligonucleotides, which are then degraded further into small acid-soluble oligonucleotides. The chain is Exodeoxyribonuclease 7 small subunit from Citrobacter koseri (strain ATCC BAA-895 / CDC 4225-83 / SGSC4696).